The primary structure comprises 977 residues: Bifunctional glutamine synthetase adenylyltransferase/adenylyl-removing enzyme (977 aa).

Positions 1–457 (MRLPLPSDLP…HFRQVIADPD (457 aa)) are adenylyl removase. Residues 468 to 977 (GGEWSPLWEQ…RRIWGELGLS (510 aa)) are adenylyl transferase.

This sequence belongs to the GlnE family. Mg(2+) is required as a cofactor.

It carries out the reaction [glutamine synthetase]-O(4)-(5'-adenylyl)-L-tyrosine + phosphate = [glutamine synthetase]-L-tyrosine + ADP. The catalysed reaction is [glutamine synthetase]-L-tyrosine + ATP = [glutamine synthetase]-O(4)-(5'-adenylyl)-L-tyrosine + diphosphate. Involved in the regulation of glutamine synthetase GlnA, a key enzyme in the process to assimilate ammonia. When cellular nitrogen levels are high, the C-terminal adenylyl transferase (AT) inactivates GlnA by covalent transfer of an adenylyl group from ATP to specific tyrosine residue of GlnA, thus reducing its activity. Conversely, when nitrogen levels are low, the N-terminal adenylyl removase (AR) activates GlnA by removing the adenylyl group by phosphorolysis, increasing its activity. The regulatory region of GlnE binds the signal transduction protein PII (GlnB) which indicates the nitrogen status of the cell. The protein is Bifunctional glutamine synthetase adenylyltransferase/adenylyl-removing enzyme of Pseudomonas putida (strain ATCC 47054 / DSM 6125 / CFBP 8728 / NCIMB 11950 / KT2440).